The following is a 319-amino-acid chain: L-tryptophan isonitrile synthase AmbI1 (319 aa).

It belongs to the isocyanide synthase family.

The catalysed reaction is D-ribulose 5-phosphate + L-tryptophan = (2S)-3-(1H-indol-3-yl)-2-isocyanopropanoate + hydroxyacetone + formaldehyde + phosphate + H2O + H(+). In terms of biological role, involved in the biosynthesis of ambiguines, a family of hapalindole-type alkaloids. Responsible for the synthesis of the isonitrile group on tryptophan using ribulose 5-phosphate as the source of the carbon atom. This Fischerella ambigua (strain UTEX 1903) protein is L-tryptophan isonitrile synthase AmbI1.